A 99-amino-acid polypeptide reads, in one-letter code: Acylphosphatase (99 aa).

Positions 5–97 (IRQVMVRGRV…YAGERFSILS (93 aa)) constitute an Acylphosphatase-like domain. Active-site residues include arginine 20 and asparagine 38.

This sequence belongs to the acylphosphatase family.

It catalyses the reaction an acyl phosphate + H2O = a carboxylate + phosphate + H(+). The sequence is that of Acylphosphatase (acyP) from Rhodopseudomonas palustris (strain BisB5).